The sequence spans 169 residues: HTH-type transcriptional regulator PchR (169 aa).

The 144-residue stretch at 10–153 (YDIYVRLLHL…VLKFLEQLTS (144 aa)) folds into the HTH marR-type domain. A DNA-binding region (H-T-H motif) is located at residues 64–87 (NAGIARKMNLSKANVTKISTKLIK).

Homodimer.

Its function is as follows. Represses the expression of the yvmC-cypX operon, which is involved in pulcherriminic acid biosynthesis. Also negatively regulates yvmA, yvnB and its own expression. Positively regulates yisI expression. Acts by binding specifically to a 14-bp palindromic motif, the YvmB box, which is present in the promoter region of the target genes. The protein is HTH-type transcriptional regulator PchR of Bacillus subtilis (strain 168).